Consider the following 194-residue polypeptide: Adenylate kinase (194 aa).

11–16 (GSGKGT) contributes to the ATP binding site. The interval 31 to 60 (STGELLRAEIKAQTELGQAAAGYINEGHLV) is NMP. Residues Thr32, Arg37, 58 to 60 (HLV), 86 to 89 (GFPR), and Gln93 contribute to the AMP site. The segment at 127–137 (NRGKISGRSDD) is LID. Residue Arg128 participates in ATP binding. AMP contacts are provided by Arg134 and Arg145. Residue Gly173 participates in ATP binding.

The protein belongs to the adenylate kinase family. As to quaternary structure, monomer.

Its subcellular location is the cytoplasm. It carries out the reaction AMP + ATP = 2 ADP. It functions in the pathway purine metabolism; AMP biosynthesis via salvage pathway; AMP from ADP: step 1/1. Functionally, catalyzes the reversible transfer of the terminal phosphate group between ATP and AMP. Plays an important role in cellular energy homeostasis and in adenine nucleotide metabolism. This Porphyromonas gingivalis (strain ATCC 33277 / DSM 20709 / CIP 103683 / JCM 12257 / NCTC 11834 / 2561) protein is Adenylate kinase.